The chain runs to 354 residues: Uroporphyrinogen decarboxylase (354 aa).

Residues R27–R31, D77, Y154, T209, and H327 contribute to the substrate site.

The protein belongs to the uroporphyrinogen decarboxylase family. As to quaternary structure, homodimer.

The protein resides in the cytoplasm. It catalyses the reaction uroporphyrinogen III + 4 H(+) = coproporphyrinogen III + 4 CO2. The protein operates within porphyrin-containing compound metabolism; protoporphyrin-IX biosynthesis; coproporphyrinogen-III from 5-aminolevulinate: step 4/4. Its function is as follows. Catalyzes the decarboxylation of four acetate groups of uroporphyrinogen-III to yield coproporphyrinogen-III. This Mannheimia succiniciproducens (strain KCTC 0769BP / MBEL55E) protein is Uroporphyrinogen decarboxylase.